The primary structure comprises 1148 residues: Pyruvate carboxylase (1148 aa).

Positions 1-457 (MSQQSIQKVL…DTSFIDTTPE (457 aa)) constitute a Biotin carboxylation domain. The ATP site is built by Lys-121, Glu-205, and His-240. The region spanning 125–321 (REQAEKAGIP…IVQTQILVAQ (197 aa)) is the ATP-grasp domain. The active site involves Lys-242. The Pyruvate carboxyltransferase domain occupies 534-802 (VLLTDTTFRD…RPEMNVQGVE (269 aa)). Substrate contacts are provided by residues 542–546 (RDAHQ) and Arg-615. Asp-543 is a binding site for a divalent metal cation. Positions 712, 741, and 743 each coordinate a divalent metal cation. Position 712 is an N6-carboxylysine (Lys-712). Thr-876 serves as a coordination point for substrate. The Biotinyl-binding domain maps to 1071–1146 (KADRTNPSHI…QTGDLLLEIE (76 aa)). Position 1112 is an N6-biotinyllysine (Lys-1112).

In terms of assembly, homotetramer. At very low potassium concentrations, when intracellular levels of c-di-AMP are low, interacts with apo-DarB. c-di-AMP inhibits the binding of DarB to PYC. Does not bind directly c-di-AMP. It depends on biotin as a cofactor.

The catalysed reaction is hydrogencarbonate + pyruvate + ATP = oxaloacetate + ADP + phosphate + H(+). Activated by the cyclic di-AMP (c-di-AMP) receptor DarB in the absence of c-di-AMP. Allosterically activated by acetyl-CoA. Inhibited by the biotin-complexing protein avidin. In terms of biological role, catalyzes a 2-step reaction, involving the ATP-dependent carboxylation of the covalently attached biotin in the first step and the transfer of the carboxyl group to pyruvate in the second, leading to oxaloacetate production. Fulfills an anaplerotic function in B.subtilis as it is necessary for growth on glucose, but is not required for sporulation. This chain is Pyruvate carboxylase (pyc), found in Bacillus subtilis (strain 168).